The chain runs to 607 residues: uncharacterized protein (607 aa).

The zn(2)-C6 fungal-type DNA-binding region spans 16–44 (CTVCRKRKLKCDGNKPCGRCIRLNTPKEC).

It is found in the nucleus. This is an uncharacterized protein from Saccharomyces cerevisiae (strain ATCC 204508 / S288c) (Baker's yeast).